A 178-amino-acid chain; its full sequence is Protein RICE FLOWERING LOCUS T 1 (178 aa).

It belongs to the phosphatidylethanolamine-binding protein family. Interacts with FTIP1. In terms of tissue distribution, expressed in leaf vascular tissues. Specifically expressed in the phloem including companion cells.

It localises to the cytoplasm. Its subcellular location is the nucleus. It is found in the endoplasmic reticulum. Probable mobile flower-promoting signal (florigen) that moves from the leaf to the shoot apical meristem (SAM) and induces flowering. Promotes the transition from vegetative growth to flowering under long day (LD) conditions. Acts upstream of MADS14 and MADS15. May also participate in the promotion of flowering under short day (SD) conditions. This chain is Protein RICE FLOWERING LOCUS T 1, found in Oryza sativa subsp. japonica (Rice).